Here is a 126-residue protein sequence, read N- to C-terminus: Small ribosomal subunit protein uS13c (126 aa).

The tract at residues 97–126 (PLRGQRTRTNARTRRGGKKTVAGKKKAPRK) is disordered. Residues 101-126 (QRTRTNARTRRGGKKTVAGKKKAPRK) show a composition bias toward basic residues.

The protein belongs to the universal ribosomal protein uS13 family. Part of the 30S ribosomal subunit.

The protein localises to the plastid. Its subcellular location is the chloroplast. In terms of biological role, located at the top of the head of the 30S subunit, it contacts several helices of the 16S rRNA. This is Small ribosomal subunit protein uS13c from Pyropia yezoensis (Susabi-nori).